Here is a 450-residue protein sequence, read N- to C-terminus: Bifunctional protein GlmU (450 aa).

A pyrophosphorylase region spans residues 1–236 (MTAHKPFSAV…AWEVSGVNNR (236 aa)). Residues 12-15 (LAAG), lysine 26, glutamine 79, 84-85 (GT), 107-109 (YGD), glycine 147, glutamate 162, asparagine 177, and asparagine 234 contribute to the UDP-N-acetyl-alpha-D-glucosamine site. Aspartate 109 contributes to the Mg(2+) binding site. Asparagine 234 lines the Mg(2+) pocket. The segment at 237–257 (AELASLESLWQNRKRQDVMKD) is linker. Residues 258–450 (GASLIAPETV…KKFRQRKKKK (193 aa)) are N-acetyltransferase. Positions 323 and 341 each coordinate UDP-N-acetyl-alpha-D-glucosamine. Catalysis depends on histidine 353, which acts as the Proton acceptor. Positions 356 and 367 each coordinate UDP-N-acetyl-alpha-D-glucosamine. Acetyl-CoA is bound by residues 376-377 (NY), serine 395, alanine 413, and arginine 430.

It in the N-terminal section; belongs to the N-acetylglucosamine-1-phosphate uridyltransferase family. This sequence in the C-terminal section; belongs to the transferase hexapeptide repeat family. In terms of assembly, homotrimer. It depends on Mg(2+) as a cofactor.

The protein localises to the cytoplasm. It carries out the reaction alpha-D-glucosamine 1-phosphate + acetyl-CoA = N-acetyl-alpha-D-glucosamine 1-phosphate + CoA + H(+). It catalyses the reaction N-acetyl-alpha-D-glucosamine 1-phosphate + UTP + H(+) = UDP-N-acetyl-alpha-D-glucosamine + diphosphate. Its pathway is nucleotide-sugar biosynthesis; UDP-N-acetyl-alpha-D-glucosamine biosynthesis; N-acetyl-alpha-D-glucosamine 1-phosphate from alpha-D-glucosamine 6-phosphate (route II): step 2/2. It functions in the pathway nucleotide-sugar biosynthesis; UDP-N-acetyl-alpha-D-glucosamine biosynthesis; UDP-N-acetyl-alpha-D-glucosamine from N-acetyl-alpha-D-glucosamine 1-phosphate: step 1/1. It participates in bacterial outer membrane biogenesis; LPS lipid A biosynthesis. Its function is as follows. Catalyzes the last two sequential reactions in the de novo biosynthetic pathway for UDP-N-acetylglucosamine (UDP-GlcNAc). The C-terminal domain catalyzes the transfer of acetyl group from acetyl coenzyme A to glucosamine-1-phosphate (GlcN-1-P) to produce N-acetylglucosamine-1-phosphate (GlcNAc-1-P), which is converted into UDP-GlcNAc by the transfer of uridine 5-monophosphate (from uridine 5-triphosphate), a reaction catalyzed by the N-terminal domain. The polypeptide is Bifunctional protein GlmU (Zymomonas mobilis subsp. mobilis (strain ATCC 31821 / ZM4 / CP4)).